We begin with the raw amino-acid sequence, 160 residues long: Keratin-associated protein 9-6 (160 aa).

16 tandem repeats follow at residues C4 to G8, C13 to T17, C18 to T22, C37 to S41, C42 to S46, C47 to Y51, C56 to T60, C61 to T65, C66 to T70, C75 to S79, C80 to P84, C90 to S94, C95 to T99, C140 to C144, C149 to S153, and C154 to S158. The 16 X 5 AA repeats of C-C-[GSVRQ]-[QTSPHN]-[TPSGYC] stretch occupies residues C4 to S158.

It belongs to the KRTAP type 9 family. As to quaternary structure, interacts with hair keratins.

In the hair cortex, hair keratin intermediate filaments are embedded in an interfilamentous matrix, consisting of hair keratin-associated proteins (KRTAP), which are essential for the formation of a rigid and resistant hair shaft through their extensive disulfide bond cross-linking with abundant cysteine residues of hair keratins. The matrix proteins include the high-sulfur and high-glycine-tyrosine keratins. The polypeptide is Keratin-associated protein 9-6 (Homo sapiens (Human)).